The sequence spans 150 residues: SsrA-binding protein (150 aa).

This sequence belongs to the SmpB family.

The protein resides in the cytoplasm. Required for rescue of stalled ribosomes mediated by trans-translation. Binds to transfer-messenger RNA (tmRNA), required for stable association of tmRNA with ribosomes. tmRNA and SmpB together mimic tRNA shape, replacing the anticodon stem-loop with SmpB. tmRNA is encoded by the ssrA gene; the 2 termini fold to resemble tRNA(Ala) and it encodes a 'tag peptide', a short internal open reading frame. During trans-translation Ala-aminoacylated tmRNA acts like a tRNA, entering the A-site of stalled ribosomes, displacing the stalled mRNA. The ribosome then switches to translate the ORF on the tmRNA; the nascent peptide is terminated with the 'tag peptide' encoded by the tmRNA and targeted for degradation. The ribosome is freed to recommence translation, which seems to be the essential function of trans-translation. The polypeptide is SsrA-binding protein (Rubrobacter xylanophilus (strain DSM 9941 / JCM 11954 / NBRC 16129 / PRD-1)).